Reading from the N-terminus, the 392-residue chain is Queuine tRNA-ribosyltransferase (392 aa).

Asp92 (proton acceptor) is an active-site residue. Substrate is bound by residues 92–96, Asp146, Gln188, and Gly215; that span reads DSGGF. The RNA binding stretch occupies residues 246–252; the sequence is GVGSPED. Asp265 serves as the catalytic Nucleophile. The interval 270-274 is RNA binding; important for wobble base 34 recognition; the sequence is TRLGR. Residues Cys303, Cys305, Cys308, and His334 each contribute to the Zn(2+) site.

This sequence belongs to the queuine tRNA-ribosyltransferase family. Homodimer. Within each dimer, one monomer is responsible for RNA recognition and catalysis, while the other monomer binds to the replacement base PreQ1. Requires Zn(2+) as cofactor.

It carries out the reaction 7-aminomethyl-7-carbaguanine + guanosine(34) in tRNA = 7-aminomethyl-7-carbaguanosine(34) in tRNA + guanine. Its pathway is tRNA modification; tRNA-queuosine biosynthesis. Functionally, catalyzes the base-exchange of a guanine (G) residue with the queuine precursor 7-aminomethyl-7-deazaguanine (PreQ1) at position 34 (anticodon wobble position) in tRNAs with GU(N) anticodons (tRNA-Asp, -Asn, -His and -Tyr). Catalysis occurs through a double-displacement mechanism. The nucleophile active site attacks the C1' of nucleotide 34 to detach the guanine base from the RNA, forming a covalent enzyme-RNA intermediate. The proton acceptor active site deprotonates the incoming PreQ1, allowing a nucleophilic attack on the C1' of the ribose to form the product. After dissociation, two additional enzymatic reactions on the tRNA convert PreQ1 to queuine (Q), resulting in the hypermodified nucleoside queuosine (7-(((4,5-cis-dihydroxy-2-cyclopenten-1-yl)amino)methyl)-7-deazaguanosine). The protein is Queuine tRNA-ribosyltransferase of Herpetosiphon aurantiacus (strain ATCC 23779 / DSM 785 / 114-95).